The following is a 270-amino-acid chain: Putative phosphoenolpyruvate synthase regulatory protein (270 aa).

Residue 154–161 (GVSRAGKT) coordinates ADP.

This sequence belongs to the pyruvate, phosphate/water dikinase regulatory protein family. PSRP subfamily.

It carries out the reaction [pyruvate, water dikinase] + ADP = [pyruvate, water dikinase]-phosphate + AMP + H(+). The enzyme catalyses [pyruvate, water dikinase]-phosphate + phosphate + H(+) = [pyruvate, water dikinase] + diphosphate. Functionally, bifunctional serine/threonine kinase and phosphorylase involved in the regulation of the phosphoenolpyruvate synthase (PEPS) by catalyzing its phosphorylation/dephosphorylation. In Deinococcus geothermalis (strain DSM 11300 / CIP 105573 / AG-3a), this protein is Putative phosphoenolpyruvate synthase regulatory protein.